The following is a 175-amino-acid chain: Gamma-crystallin B (175 aa).

2 Beta/gamma crystallin 'Greek key' domains span residues 2–40 and 41–83; these read GKIT…RVES and GCWM…CLIP. Residues 84-88 are connecting peptide; that stretch reads PHSGA. Beta/gamma crystallin 'Greek key' domains are found at residues 89–129 and 130–172; these read YRMK…NVLE and GSWI…RRVM.

Belongs to the beta/gamma-crystallin family. As to quaternary structure, monomer.

Crystallins are the dominant structural components of the vertebrate eye lens. The protein is Gamma-crystallin B (CRYGB) of Homo sapiens (Human).